A 784-amino-acid chain; its full sequence is DNA ligase (784 aa).

NAD(+) contacts are provided by residues 35–39 (DAEYD), 84–85 (SL), and glutamate 117. Residue lysine 119 is the N6-AMP-lysine intermediate of the active site. Residues arginine 140, glutamate 177, lysine 294, and lysine 318 each coordinate NAD(+). Positions 412, 415, 442, and 448 each coordinate Zn(2+). A BRCT domain is found at 703-784 (AEGLPLAGQT…FLALLRQLES (82 aa)).

It belongs to the NAD-dependent DNA ligase family. LigA subfamily. Mg(2+) serves as cofactor. The cofactor is Mn(2+).

It carries out the reaction NAD(+) + (deoxyribonucleotide)n-3'-hydroxyl + 5'-phospho-(deoxyribonucleotide)m = (deoxyribonucleotide)n+m + AMP + beta-nicotinamide D-nucleotide.. In terms of biological role, DNA ligase that catalyzes the formation of phosphodiester linkages between 5'-phosphoryl and 3'-hydroxyl groups in double-stranded DNA using NAD as a coenzyme and as the energy source for the reaction. It is essential for DNA replication and repair of damaged DNA. The polypeptide is DNA ligase (Azotobacter vinelandii (strain DJ / ATCC BAA-1303)).